Consider the following 520-residue polypeptide: Cytochrome b5 reductase 4 (520 aa).

Residue methionine 1 is modified to N-acetylmethionine. The tract at residues 1–27 is disordered; it reads MLNVPSQAFPAPGSQQRVASQGRSKVP. A compositionally biased stretch (polar residues) spans 13–23; sequence GSQQRVASQGR. The region spanning 54-130 is the Cytochrome b5 heme-binding domain; the sequence is LIEVTEEELK…LKECLVGRMA (77 aa). 2 residues coordinate heme: histidine 89 and histidine 112. One can recognise a CS domain in the interval 164 to 255; it reads PSSPSYDWFQ…KETVSWKCLG (92 aa). Positions 272-384 constitute an FAD-binding FR-type domain; sequence LYYRQCQLIS…SGPEGNFKVS (113 aa). FAD contacts are provided by residues 364 to 379 and 391 to 423; these read DRLQIGDFVSVSGPEG and DLFLLAAGTGFTPMVTVLNHALTHMSSLRKVKL.

This sequence belongs to the flavoprotein pyridine nucleotide cytochrome reductase family. FAD serves as cofactor. Isoform 2 is expressed in testis, brain, skeletal muscle and in the male germline.

Its subcellular location is the endoplasmic reticulum. The enzyme catalyses 2 Fe(III)-[cytochrome b5] + NADH = 2 Fe(II)-[cytochrome b5] + NAD(+) + H(+). Its function is as follows. NADH-cytochrome b5 reductase involved in endoplasmic reticulum stress response pathway. Plays a critical role in protecting pancreatic beta-cells against oxidant stress, possibly by protecting the cell from excess buildup of reactive oxygen species (ROS). This chain is Cytochrome b5 reductase 4 (Cyb5r4), found in Rattus norvegicus (Rat).